The chain runs to 136 residues: Large ribosomal subunit protein uL16 (136 aa).

It belongs to the universal ribosomal protein uL16 family. In terms of assembly, part of the 50S ribosomal subunit.

Its function is as follows. Binds 23S rRNA and is also seen to make contacts with the A and possibly P site tRNAs. The protein is Large ribosomal subunit protein uL16 of Ruthia magnifica subsp. Calyptogena magnifica.